Reading from the N-terminus, the 98-residue chain is Large ribosomal subunit protein uL23 (98 aa).

This sequence belongs to the universal ribosomal protein uL23 family. As to quaternary structure, part of the 50S ribosomal subunit. Contacts protein L29, and trigger factor when it is bound to the ribosome.

In terms of biological role, one of the early assembly proteins it binds 23S rRNA. One of the proteins that surrounds the polypeptide exit tunnel on the outside of the ribosome. Forms the main docking site for trigger factor binding to the ribosome. This Cereibacter sphaeroides (strain ATCC 17025 / ATH 2.4.3) (Rhodobacter sphaeroides) protein is Large ribosomal subunit protein uL23.